The primary structure comprises 316 residues: 1-phosphofructokinase (316 aa).

ATP contacts are provided by residues 225-230 (SMGAGG) and 256-257 (GD). Aspartate 257 serves as the catalytic Proton acceptor.

It belongs to the carbohydrate kinase PfkB family.

The enzyme catalyses beta-D-fructose 1-phosphate + ATP = beta-D-fructose 1,6-bisphosphate + ADP + H(+). In terms of biological role, catalyzes the ATP-dependent phosphorylation of fructose-l-phosphate to fructose-l,6-bisphosphate. This is 1-phosphofructokinase from Rhodobacter capsulatus (Rhodopseudomonas capsulata).